We begin with the raw amino-acid sequence, 175 residues long: Inorganic pyrophosphatase (175 aa).

Positions 30, 44, and 56 each coordinate substrate. Mg(2+)-binding residues include D66, D71, and D103. Y142 serves as a coordination point for substrate.

The protein belongs to the PPase family. Homohexamer. Requires Mg(2+) as cofactor.

Its subcellular location is the cytoplasm. The enzyme catalyses diphosphate + H2O = 2 phosphate + H(+). Its function is as follows. Catalyzes the hydrolysis of inorganic pyrophosphate (PPi) forming two phosphate ions. In Pseudomonas aeruginosa (strain ATCC 15692 / DSM 22644 / CIP 104116 / JCM 14847 / LMG 12228 / 1C / PRS 101 / PAO1), this protein is Inorganic pyrophosphatase.